A 556-amino-acid chain; its full sequence is Arginine--tRNA ligase (556 aa).

Residues 132 to 142 (ANPTGDLHLGH) carry the 'HIGH' region motif.

This sequence belongs to the class-I aminoacyl-tRNA synthetase family. In terms of assembly, monomer.

The protein resides in the cytoplasm. The enzyme catalyses tRNA(Arg) + L-arginine + ATP = L-arginyl-tRNA(Arg) + AMP + diphosphate. The protein is Arginine--tRNA ligase (argS) of Bacillus subtilis (strain 168).